The following is a 442-amino-acid chain: Phosphatidylserine synthase 2 (442 aa).

Residues 1–40 lie on the Cytoplasmic side of the membrane; the sequence is MRRGERRGPAGPLGDGPALGLRRSTESEVYDDGTNTFFWR. A helical membrane pass occupies residues 41–61; sequence AHTLTVLFILTCALGYVTLLE. Over 62–74 the chain is Lumenal; it reads ETPQDTAYNTKRG. Residues 75-95 form a helical membrane-spanning segment; sequence IVASILVFLCFGVTQAKDGPF. Residues 96-104 are Cytoplasmic-facing; sequence SRPHPAYWR. The helical transmembrane segment at 105–125 threads the bilayer; sequence FWLCVSVVYELFLIFILFQTV. At 126-291 the chain is on the lumenal side; the sequence is QDGRQFMKYI…EWKPASSLRR (166 aa). N-linked (GlcNAc...) asparagine glycans are attached at residues asparagine 159 and asparagine 215. The helical transmembrane segment at 292 to 312 threads the bilayer; it reads WLAVCGIIFVFLLAELNTFYL. Residue lysine 313 is a topological domain, cytoplasmic. The chain crosses the membrane as a helical span at residues 314–334; that stretch reads FVLWMPPEHYLVLLRLVFFVN. At 335-354 the chain is on the lumenal side; it reads VGGVAMREIYDFMDDPKFHK. The chain crosses the membrane as a helical span at residues 355–375; it reads KLGQQAWLVAAITATEFLIVV. Topologically, residues 376–381 are cytoplasmic; it reads KYDPYT. Residues 382 to 402 form a helical membrane-spanning segment; sequence LTLSLPFYITQCWILGIILVL. The Lumenal portion of the chain corresponds to 403–442; that stretch reads TWTAWRFFIRDITLRYKEIRRQKQEHKYEKDKCLSNGDGH.

It belongs to the phosphatidyl serine synthase family.

It localises to the endoplasmic reticulum membrane. It catalyses the reaction a 1,2-diacyl-sn-glycero-3-phosphoethanolamine + L-serine = a 1,2-diacyl-sn-glycero-3-phospho-L-serine + ethanolamine. The enzyme catalyses 1-hexadecanoyl-2-(9Z-octadecenoyl)-sn-glycero-3-phosphoethanolamine + L-serine = 1-hexadecanoyl-2-(9Z-octadecenoyl)-sn-glycero-3-phospho-L-serine + ethanolamine. The catalysed reaction is 1-hexadecanoyl-2-(4Z,7Z,10Z,13Z,16Z,19Z-docosahexaenoyl)-sn-glycero-3-phosphoethanolamine + L-serine = 1-hexadecanoyl-2-(4Z,7Z,10Z,13Z,16Z,19Z-docosahexaenoyl)-sn-glycero-3-phosphoserine + ethanolamine. It carries out the reaction 1-octadecanoyl-2-(5Z,8Z,11Z,14Z)-eicosatetraenoyl-sn-glycero-3-phosphoethanolamine + L-serine = 1-octadecanoyl-2-(5Z,8Z,11Z,14Z)-eicosatetraenoyl-sn-glycero-3-phosphoserine + ethanolamine. It catalyses the reaction 1-octadecanoyl-2-(4Z,7Z,10Z,13Z,16Z,19Z-docosahexaenoyl)-sn-glycero-3-phosphoethanolamine + L-serine = 1-octadecanoyl-2-(4Z,7Z,10Z,13Z,16Z,19Z-docosahexaenoyl)-sn-glycero-3-phosphoserine + ethanolamine. The enzyme catalyses 1-(1Z-octadecenyl)-2-(4Z,7Z,10Z,13Z,16Z,19Z-docosahexaenoyl)-sn-glycero-3-phosphoethanolamine + L-serine = 1-(1Z-octadecenyl)-2-(4Z,7Z,10Z,13Z,16Z,19Z-docosahexaenoyl)-sn-glycero-3-phospho-L-serine + ethanolamine. The catalysed reaction is 1-octadecanoyl-2-(9Z-octadecenoyl)-sn-glycero-3-phosphoethanolamine + L-serine = 1-octadecanoyl-2-(9Z-octadecenoyl)-sn-glycero-3-phospho-L-serine + ethanolamine. It carries out the reaction 1-(1Z-octadecenyl)-2-(9Z-octadecenoyl)-sn-glycero-3-phosphoethanolamine + L-serine = 1-(1Z-octadecenyl)-2-(9Z-octadecenoyl)-sn-glycero-3-phospho-L-serine + ethanolamine. It catalyses the reaction 1-(1Z-octadecenyl)-2-(5Z,8Z,11Z,14Z- eicosatetraenoyl)-sn-glycero-3-phosphoethanolamine + L-serine = 1-(1Z-octadecenyl)-2-(5Z,8Z,11Z,14Z-eicosatetraenoyl)-sn-glycero-3-phospho-L-serine + ethanolamine. Its pathway is phospholipid metabolism; phosphatidylserine biosynthesis. Functionally, catalyzes a base-exchange reaction in which the polar head group of phosphatidylethanolamine (PE) or phosphatidylcholine (PC) is replaced by L-serine. Catalyzes the conversion of phosphatatidylethanolamine and does not act on phosphatidylcholine. Can utilize both phosphatidylethanolamine (PE) plasmalogen and diacyl PE as substrate and the latter is six times better utilized, indicating the importance of an ester linkage at the sn-1 position. Although it shows no sn-1 fatty acyl preference, exhibits significant preference towards docosahexaenoic acid (22:6n-3) compared with 18:1 or 20:4 at the sn-2 position. This is Phosphatidylserine synthase 2 (PTDSS1) from Gallus gallus (Chicken).